Here is a 383-residue protein sequence, read N- to C-terminus: MFEPMELTNDAVIKVIGVGGGGGNAVEHMVRERIEGVEFFAVNTDAQALRKTAVGQTIQIGSGITKGLGAGANPEVGRNAADEDRDALRAALEGADMVFIAAGMGGGTGTGAAPVVAEVAKDLGILTVAVVTKPFNFEGKKRMAFAEQGITELSKHVDSLITIPNDKLLKVLGRGISLLDAFGAANDVLKGAVQGIAELITRPGLMNVDFADVRTVMSEMGYAMMGSGVASGEDRAEEAAEMAISSPLLEDIDLSGARGVLVNITAGFDLRLDEFETVGNTIRAFASDNATVVIGTSLDPDMNDELRVTVVATGIGMDKRPEITLVTNKQVQQPVMDRYQQHGMAPLTQEQKPVAKVVNDNAPQTAKEPDYLDIPAFLRKQAD.

GTP is bound by residues glycine 20 to asparagine 24, glycine 107 to glycine 109, glutamate 138, arginine 142, and asparagine 186.

The protein belongs to the FtsZ family. Homodimer. Polymerizes to form a dynamic ring structure in a strictly GTP-dependent manner. Interacts directly with several other division proteins.

It is found in the cytoplasm. In terms of biological role, essential cell division protein that forms a contractile ring structure (Z ring) at the future cell division site. The regulation of the ring assembly controls the timing and the location of cell division. One of the functions of the FtsZ ring is to recruit other cell division proteins to the septum to produce a new cell wall between the dividing cells. Binds GTP and shows GTPase activity. This chain is Cell division protein FtsZ, found in Escherichia coli O157:H7.